Here is a 232-residue protein sequence, read N- to C-terminus: Triosephosphate isomerase (232 aa).

6–8 (NFK) lines the substrate pocket. The active-site Electrophile is His-86. Glu-155 acts as the Proton acceptor in catalysis. 2 residues coordinate substrate: Gly-161 and Ser-191.

Belongs to the triosephosphate isomerase family. In terms of assembly, homodimer.

It is found in the cytoplasm. It catalyses the reaction D-glyceraldehyde 3-phosphate = dihydroxyacetone phosphate. The protein operates within carbohydrate biosynthesis; gluconeogenesis. Its pathway is carbohydrate degradation; glycolysis; D-glyceraldehyde 3-phosphate from glycerone phosphate: step 1/1. Its function is as follows. Involved in the gluconeogenesis. Catalyzes stereospecifically the conversion of dihydroxyacetone phosphate (DHAP) to D-glyceraldehyde-3-phosphate (G3P). This chain is Triosephosphate isomerase, found in Nitratiruptor sp. (strain SB155-2).